The following is a 688-amino-acid chain: G protein-coupled receptor kinase 3 (688 aa).

The interval 1 to 190 (MADLEAVLAD…ELNIHLSMND (190 aa)) is N-terminal. The 122-residue stretch at 54-175 (TFDKIFNQKI…MESEKFTRFC (122 aa)) folds into the RGS domain. In terms of domain architecture, Protein kinase spans 191-453 (FSVHRIIGRG…ARELKEHIFF (263 aa)). ATP-binding positions include 197-205 (IGRGGFGEV) and lysine 220. The Proton acceptor role is filled by aspartate 317. The AGC-kinase C-terminal domain occupies 454–521 (KGIDWQYVYL…MISERWQQEV (68 aa)). One can recognise a PH domain in the interval 558-652 (DCIMHGYMLK…WLKELTCTFN (95 aa)).

It belongs to the protein kinase superfamily. AGC Ser/Thr protein kinase family. GPRK subfamily. Interacts with GIT1. In terms of processing, ubiquitinated. Expressed in brain cortex, hippocampus, striatum, hypothalamus, cerebellum and brainstem (at protein level).

It localises to the postsynapse. Its subcellular location is the presynapse. It catalyses the reaction [beta-adrenergic receptor] + ATP = [beta-adrenergic receptor]-phosphate + ADP + H(+). Functionally, specifically phosphorylates the agonist-occupied form of the beta-adrenergic and closely related receptors. This Rattus norvegicus (Rat) protein is G protein-coupled receptor kinase 3.